We begin with the raw amino-acid sequence, 315 residues long: Calcium homeostasis modulator protein 6 (315 aa).

Over 1-21 (MEKFKAVLDLQIKHRSALGYG) the chain is Cytoplasmic. The helical transmembrane segment at 22 to 37 (LVTLLTAGGEKIFSTV) threads the bilayer. The Extracellular segment spans residues 38 to 46 (VFQCPCTAT). Intrachain disulfides connect Cys41-Cys127, Cys43-Cys156, and Cys140-Cys147. Residues 47–68 (LNLTYGLVFLLVPALALFLLGY) traverse the membrane as a helical segment. Residues 69 to 103 (ALSARTWRLLTGCCSRSASTRSSSGLRSTLVCAQV) lie on the Cytoplasmic side of the membrane. A helical membrane pass occupies residues 104–128 (SAVAALAPLTWVAVALLGGSFYQCA). Residues 129-169 (VSGSTRLASYLCKDRNHSCIAKLPQVPCNKQEAEMQEILSQ) are Extracellular-facing. A helical membrane pass occupies residues 170–192 (LKAQSQVLGWVLIAAVIFLLLVF). Residues 193–315 (KCVSRCFSPV…DAAMANTHGV (123 aa)) lie on the Cytoplasmic side of the membrane.

Belongs to the CALHM family. Oligomerizes to form decameric and undecameric channels.

The protein localises to the cell membrane. It catalyses the reaction ATP(in) = ATP(out). Its function is as follows. Pore-forming subunit of an ATP-permeable channel. In response to pathogen-derived and proinflammatory stimuli, relocates from intracellular compartments to NK-dendritic cell and NK-macrophage immune synapses where it mediates ATP efflux and NK cell activation involved in antimicrobial and antitumor responses. May assemble to form gap junction channel-like structures with gating and ion conductance likely regulated by membrane lipids and voltage rather than by extracellular calcium levels. The chain is Calcium homeostasis modulator protein 6 from Rattus norvegicus (Rat).